An 804-amino-acid polypeptide reads, in one-letter code: Pentatricopeptide repeat-containing protein At4g35130, chloroplastic (804 aa).

The transit peptide at 1–19 (MAATLLSQCYRIYNSDACK) directs the protein to the chloroplast. 16 PPR repeats span residues 63–93 (NDPA…MNKA), 94–128 (DAFL…GVKA), 129–163 (DTFT…GFVS), 164–194 (DVYV…MPER), 195–229 (DIVS…GFKP), 230–264 (DRFS…RIET), 266–296 (DVMV…MIQR), 297–332 (NIVA…GLQP), 333–363 (DVIT…GFLP), 364–394 (HMVL…MAEK), 395–429 (NVIS…SLVP), 430–464 (DSTT…RYWS), 465–495 (NTII…ILLK), 496–530 (DVVS…RVNP), 531–561 (NKST…MKRE), and 567–597 (GIEH…MPFV). The tract at residues 602 to 677 (IWGSLLNASR…TSSRSTVEAK (76 aa)) is type E motif. The segment at 678 to 708 (GKSHVFTNGDRSHVATNKIYEVLDVVSRMVG) is type E(+) motif. The interval 710–804 (EDIYVHCVSR…NGRCSCGNYW (95 aa)) is type DYW motif.

It belongs to the PPR family. PCMP-H subfamily.

It localises to the plastid. It is found in the chloroplast. This chain is Pentatricopeptide repeat-containing protein At4g35130, chloroplastic (PCMP-H27), found in Arabidopsis thaliana (Mouse-ear cress).